Consider the following 410-residue polypeptide: Neuroserpin (410 aa).

The first 16 residues, 1 to 16 (MAFLGLFSLLVLQSMA), serve as a signal peptide directing secretion. N-linked (GlcNAc...) asparagine glycosylation is found at asparagine 157, asparagine 321, and asparagine 401. Serine 403 is a glycosylation site (O-linked (Xyl...) (chondroitin sulfate) serine).

It belongs to the serpin family. In terms of assembly, monomer. Has a tendency to form large polymers already at 41 and 45 degrees Celsius (in vitro). As to expression, detected in brain cortex and hippocampus pyramidal neurons (at protein level). Detected in cerebrospinal fluid (at protein level). Predominantly expressed in the brain.

Its subcellular location is the secreted. It localises to the cytoplasmic vesicle. It is found in the secretory vesicle lumen. The protein localises to the perikaryon. In terms of biological role, serine protease inhibitor that inhibits plasminogen activators and plasmin but not thrombin. May be involved in the formation or reorganization of synaptic connections as well as for synaptic plasticity in the adult nervous system. May protect neurons from cell damage by tissue-type plasminogen activator. The protein is Neuroserpin (SERPINI1) of Homo sapiens (Human).